Reading from the N-terminus, the 631-residue chain is Pescadillo homolog (631 aa).

In terms of domain architecture, BRCT spans 321-414 (RLRNLFKGLK…QLLPTNKYFL (94 aa)). Disordered stretches follow at residues 450 to 469 (HAQS…EDDT) and 489 to 569 (EYKK…MVKP). 2 positions are modified to phosphoserine: S453 and S457. Acidic residues-rich tracts occupy residues 454–469 (DDES…EDDT) and 499–524 (VNED…EELD). Positions 510–541 (FDGEQESDEEEEELDEKTKRLQEEKKKMSVQS) form a coiled coil. Positions 525-536 (EKTKRLQEEKKK) are enriched in basic and acidic residues. A compositionally biased stretch (basic residues) spans 543 to 552 (KVHKVNKRQL). Residues 553-562 (HKAEVDEHRL) are compositionally biased toward basic and acidic residues.

It belongs to the pescadillo family.

It is found in the nucleus. It localises to the nucleolus. Its subcellular location is the nucleoplasm. Required for maturation of ribosomal RNAs and formation of the large ribosomal subunit. This is Pescadillo homolog from Drosophila mojavensis (Fruit fly).